Consider the following 231-residue polypeptide: 7-cyano-7-deazaguanine synthase (231 aa).

An ATP-binding site is contributed by 8 to 18; sequence FSGGQDSTTCL. Zn(2+) is bound by residues C188, C197, C200, and C203.

It belongs to the QueC family. Zn(2+) is required as a cofactor.

The catalysed reaction is 7-carboxy-7-deazaguanine + NH4(+) + ATP = 7-cyano-7-deazaguanine + ADP + phosphate + H2O + H(+). The protein operates within purine metabolism; 7-cyano-7-deazaguanine biosynthesis. Functionally, catalyzes the ATP-dependent conversion of 7-carboxy-7-deazaguanine (CDG) to 7-cyano-7-deazaguanine (preQ(0)). The polypeptide is 7-cyano-7-deazaguanine synthase (Salmonella choleraesuis (strain SC-B67)).